Reading from the N-terminus, the 120-residue chain is Ribosome-binding factor A (120 aa).

It belongs to the RbfA family. In terms of assembly, monomer. Binds 30S ribosomal subunits, but not 50S ribosomal subunits or 70S ribosomes.

Its subcellular location is the cytoplasm. Its function is as follows. One of several proteins that assist in the late maturation steps of the functional core of the 30S ribosomal subunit. Associates with free 30S ribosomal subunits (but not with 30S subunits that are part of 70S ribosomes or polysomes). Required for efficient processing of 16S rRNA. May interact with the 5'-terminal helix region of 16S rRNA. This Chlamydia caviae (strain ATCC VR-813 / DSM 19441 / 03DC25 / GPIC) (Chlamydophila caviae) protein is Ribosome-binding factor A.